Consider the following 962-residue polypeptide: MTKQTLTQLEQHDLFLRRHIGPDSSQQQAMLNYVGAESLDDLTAQIVPESIRLSQELSIGDSCGEAEGIAYIRGLAKQNQVFKSYIGMGYYGTQVPNVILRNVLENPGWYTAYTPYQPEIAQGRLEAILNFQQVSMDLTGLDLASASLLDEATAAAEAMALAKRVSKAKKANIFFVADDVFPQTLDVVKTRAECFGFEVVVGPASEAVNHELFGALFQYTNRFGQITDFTELFAELRAKNVIVTVAADIMSLVLLKSPGAMGADVVFGSAQRFGVPMGFGGPHAAFFVARDEHKRSMPGRIIGVSKDARGNRALRMAMQTREQHIRREKANSNICTAQILLANMASFYAVFHGPDGLKTIASRIHRFADILAAGLQAKGVSLVNSTWFDTLSIKGLDVAAVNARALAAEMNLRFDADGTVGVSLDETTLRTDIDALFDVILGAGHGLDVAALDAQIVAQGSQSIPAALVRQDAILSHPTFNRYQSETEMMRYIKRLESKDLALNYSMISLGSCTMKLNAAVEMIPVSWPEFANMHPFCPLDQAKGYTQLIEELSSWLVNVTGYDAVCIQPNSGAQGEYAGLLAIKKYHESRGDAHRNICLIPQSAHGTNPASAQLAGMQVVVTACDKQGNVDLEDLKTKAAEVAENLSCIMITYPSTHGVYEESIREICDIVHQHGGQVYLDGANMNAQVGLTSPGFIGADVSHLNLHKTFAIPHGGGGPGMGPIGVKSHLAPFVAGHVVVKPGRVSDNNGAVSAAPYGSAGILPISWMYIKLLGSNGLKKSTQTALLNANYVMKKLSEHYPVLFRGRNDRVAHECIIDLRPLKEASGVTEMDIAKRLNDYGFHAPTMSFPVAGTLMIEPTESESKVELDRFIDAMVSIRAEIAKVESGEWPADNNPLHNAPHTMADIMDPEFDTRPYSREVAVFPSAAVRTNKFWPTVNRIDDVYGDRNLMCSCAPLSDYE.

Position 709 is an N6-(pyridoxal phosphate)lysine (Lys709).

The protein belongs to the GcvP family. The glycine cleavage system is composed of four proteins: P, T, L and H. It depends on pyridoxal 5'-phosphate as a cofactor.

The catalysed reaction is N(6)-[(R)-lipoyl]-L-lysyl-[glycine-cleavage complex H protein] + glycine + H(+) = N(6)-[(R)-S(8)-aminomethyldihydrolipoyl]-L-lysyl-[glycine-cleavage complex H protein] + CO2. Its function is as follows. The glycine cleavage system catalyzes the degradation of glycine. The P protein binds the alpha-amino group of glycine through its pyridoxal phosphate cofactor; CO(2) is released and the remaining methylamine moiety is then transferred to the lipoamide cofactor of the H protein. The sequence is that of Glycine dehydrogenase (decarboxylating) from Shewanella putrefaciens (strain CN-32 / ATCC BAA-453).